A 135-amino-acid chain; its full sequence is C-type Lectin CRL (135 aa).

Intrachain disulfides connect cysteine 3–cysteine 14, cysteine 31–cysteine 131, cysteine 38–cysteine 133, and cysteine 106–cysteine 123. In terms of domain architecture, C-type lectin spans 10–132; sequence MNGLCYKIFN…CESKDAFLCQ (123 aa). The Ca(2+) site is built by glutamine 96, aspartate 98, glutamate 104, asparagine 119, and aspartate 120. Residues 96-98 carry the Galactose-binding motif; the sequence is QPD.

Belongs to the true venom lectin family. As to quaternary structure, homodimer; disulfide-linked. Expressed by the venom gland.

It is found in the secreted. In terms of biological role, beta-galactoside and N-acetylgalactosamine (GalNAc) specific C-type lectin. This Crotalus ruber ruber (Red diamond rattlesnake) protein is C-type Lectin CRL.